Here is a 459-residue protein sequence, read N- to C-terminus: Spermidine/putrescine import ATP-binding protein PotA (459 aa).

The ABC transporter domain maps to 15–334 (IELIDIVKQF…PRNIWVAKFI (320 aa)). 47-54 (GPSGSGKT) is an ATP binding site. The interval 115–203 (RVPKENVKKE…EEFKNKYFKR (89 aa)) is insert.

It belongs to the ABC transporter superfamily. Spermidine/putrescine importer (TC 3.A.1.11.1) family. The complex is composed of two ATP-binding proteins (PotA), two transmembrane proteins (PotB and PotC) and a solute-binding protein (PotD).

It localises to the cell membrane. The enzyme catalyses ATP + H2O + polyamine-[polyamine-binding protein]Side 1 = ADP + phosphate + polyamineSide 2 + [polyamine-binding protein]Side 1.. Its function is as follows. Part of the ABC transporter complex PotABCD involved in spermidine/putrescine import. Responsible for energy coupling to the transport system. In Mycoplasmopsis synoviae (strain 53) (Mycoplasma synoviae), this protein is Spermidine/putrescine import ATP-binding protein PotA.